The chain runs to 206 residues: Imidazole glycerol phosphate synthase subunit HisH (206 aa).

Residues 5–206 (SVVVLDYGSG…AVLSNWVDGL (202 aa)) form the Glutamine amidotransferase type-1 domain. The Nucleophile role is filled by Cys83. Active-site residues include His187 and Glu189.

In terms of assembly, heterodimer of HisH and HisF.

It is found in the cytoplasm. It carries out the reaction 5-[(5-phospho-1-deoxy-D-ribulos-1-ylimino)methylamino]-1-(5-phospho-beta-D-ribosyl)imidazole-4-carboxamide + L-glutamine = D-erythro-1-(imidazol-4-yl)glycerol 3-phosphate + 5-amino-1-(5-phospho-beta-D-ribosyl)imidazole-4-carboxamide + L-glutamate + H(+). It catalyses the reaction L-glutamine + H2O = L-glutamate + NH4(+). It participates in amino-acid biosynthesis; L-histidine biosynthesis; L-histidine from 5-phospho-alpha-D-ribose 1-diphosphate: step 5/9. IGPS catalyzes the conversion of PRFAR and glutamine to IGP, AICAR and glutamate. The HisH subunit catalyzes the hydrolysis of glutamine to glutamate and ammonia as part of the synthesis of IGP and AICAR. The resulting ammonia molecule is channeled to the active site of HisF. The polypeptide is Imidazole glycerol phosphate synthase subunit HisH (hisH) (Mycobacterium bovis (strain ATCC BAA-935 / AF2122/97)).